Consider the following 270-residue polypeptide: Glutamate racemase (270 aa).

Substrate is bound by residues 10–11 (DS) and 42–43 (YG). Cys-74 serves as the catalytic Proton donor/acceptor. 75–76 (NT) is a substrate binding site. The active-site Proton donor/acceptor is Cys-189. 190 to 191 (TH) contacts substrate.

The protein belongs to the aspartate/glutamate racemases family.

The catalysed reaction is L-glutamate = D-glutamate. Its pathway is cell wall biogenesis; peptidoglycan biosynthesis. Provides the (R)-glutamate required for cell wall biosynthesis. The polypeptide is Glutamate racemase (Bartonella henselae (strain ATCC 49882 / DSM 28221 / CCUG 30454 / Houston 1) (Rochalimaea henselae)).